We begin with the raw amino-acid sequence, 525 residues long: Patatin-like protein 8 (525 aa).

A disordered region spans residues 1–50; that stretch reads MNRRYEKPPPLSVSSKGKKKHFVNHTAPNTPGNYERTQTSPTLSTARSHE. The span at 26 to 46 shows a compositional bias: polar residues; that stretch reads TAPNTPGNYERTQTSPTLSTA. The PNPLA domain maps to 124–338; that stretch reads LSIDGGGMRG…AMSNPTAAAI (215 aa). The GXGXXG signature appears at 128-133; the sequence is GGGMRG. Catalysis depends on Ser-168, which acts as the Nucleophile.

Belongs to the patatin family. In terms of tissue distribution, specifically expressed in roots.

Possesses non-specific lipolytic acyl hydrolase (LAH) activity. Hydrolyzes phospholipids as well as galactolipids. May play a role in disease resistance. The sequence is that of Patatin-like protein 8 (PLP8) from Arabidopsis thaliana (Mouse-ear cress).